The primary structure comprises 225 residues: Ribonuclease 3 (225 aa).

Positions 5–127 constitute an RNase III domain; it reads IDKLERKLGY…IIGAIYLDSD (123 aa). A Mg(2+)-binding site is contributed by E40. D44 is a catalytic residue. Mg(2+)-binding residues include D113 and E116. E116 is a catalytic residue. One can recognise a DRBM domain in the interval 154 to 224; sequence DPKTRLQEFL…AETALEQLTN (71 aa).

Belongs to the ribonuclease III family. As to quaternary structure, homodimer. It depends on Mg(2+) as a cofactor.

Its subcellular location is the cytoplasm. It catalyses the reaction Endonucleolytic cleavage to 5'-phosphomonoester.. Its function is as follows. Digests double-stranded RNA. Involved in the processing of primary rRNA transcript to yield the immediate precursors to the large and small rRNAs (23S and 16S). Processes some mRNAs, and tRNAs when they are encoded in the rRNA operon. Processes pre-crRNA and tracrRNA of type II CRISPR loci if present in the organism. This Vibrio campbellii (strain ATCC BAA-1116) protein is Ribonuclease 3.